A 466-amino-acid chain; its full sequence is Peptidoglycan-N-acetylglucosamine deacetylase PgdA (466 aa).

The Cytoplasmic segment spans residues 1–5 (MKIRW). The chain crosses the membrane as a helical span at residues 6–26 (IRLSLVAILIIAVVFIGVIGF). The Extracellular portion of the chain corresponds to 27 to 466 (QKYQFSKSRN…FDKTDSRMVK (440 aa)). Residues 266–440 (KRIALTFDDG…KLKSQGYEFV (175 aa)) form the NodB homology domain. Residue D273 is the Proton acceptor of the active site. Zn(2+) is bound by residues D274, H324, and H328. Y365 provides a ligand contact to substrate. The active-site Proton donor is H415.

Homodimer. Interacts (via transmembrane domain) with PbpA1 (via transmembrane domain); the interaction is important for the peptidoglycan N-deacetylase function of this protein. Zn(2+) serves as cofactor.

It is found in the cell membrane. The protein localises to the secreted. It localises to the cell wall. The enzyme catalyses peptidoglycan-N-acetyl-D-glucosamine + H2O = peptidoglycan-D-glucosamine + acetate.. In terms of biological role, catalyzes the deacetylation of N-acetylglucosamine (GlcNAc) residues in peptidoglycan (PG). Also deacetylates N-acetylated PG. Does not deacetylate N-acetylmuramic acid. Confers host lysozyme resistance. Critical for virulence and escape from innate immune response of the host. Required for intracellular survival of bacteria in macrophages of the host. Required for successful host colonization. Controls the production of inflammatory mediators in the bone marrow derived macrophages (BMMs) of the infected mouse. Suppresses Toll-like receptor 2 (TLR2)-dependent secretion of interleukin 6 (IL-6) and interferon-beta (IFN-beta) in the macrophages of the infected mouse. May decrease accessibility of pattern recognition receptors (PRRs) such as nucleotide-binding oligomerization domain protein (NOD) 1 of the host to the bacterial cell wall components. Protects cells from autolysis induced by lysozyme or by other autolysis-inducing agents. The polypeptide is Peptidoglycan-N-acetylglucosamine deacetylase PgdA (Listeria monocytogenes serotype 1/2a (strain 10403S)).